Here is a 318-residue protein sequence, read N- to C-terminus: tRNA uridine(34) hydroxylase (318 aa).

The 95-residue stretch at 123-217 (EDDDTVIIDA…YGKDPETKGQ (95 aa)) folds into the Rhodanese domain. Cys177 serves as the catalytic Cysteine persulfide intermediate.

Belongs to the TrhO family.

It carries out the reaction uridine(34) in tRNA + AH2 + O2 = 5-hydroxyuridine(34) in tRNA + A + H2O. In terms of biological role, catalyzes oxygen-dependent 5-hydroxyuridine (ho5U) modification at position 34 in tRNAs. This Staphylococcus aureus (strain MRSA252) protein is tRNA uridine(34) hydroxylase.